The chain runs to 302 residues: Ribostamycin:4-(gamma-L-glutamylamino)-(S)-2-hydroxybutanoyl-[BtrI acyl-carrier protein] 4-(gamma-L-glutamylamino)-(S)-2-hydroxybutanoate transferase (302 aa).

The catalysed reaction is 4-(gamma-L-glutamylamino)-(2S)-2-hydroxybutanoyl-[BtrI ACP] + ribostamycin = gamma-L-glutamyl-butirosin B + holo-[BtrI ACP] + H(+). It functions in the pathway antibiotic biosynthesis; butirosin biosynthesis. Its function is as follows. Aminoglycoside acyltransferase that attaches the (S)-4-amino-2-hydroxybutyrate (AHBA) side chain from the acyl carrier protein BtrI to the aminoglycoside ribostamycin in the biosynthetic pathway of butirosin. The AHBA side chain protects the antibiotic from several common resistance mechanisms. The sequence is that of Ribostamycin:4-(gamma-L-glutamylamino)-(S)-2-hydroxybutanoyl-[BtrI acyl-carrier protein] 4-(gamma-L-glutamylamino)-(S)-2-hydroxybutanoate transferase (btrH) from Niallia circulans (Bacillus circulans).